The following is a 509-amino-acid chain: Dihydrolipoyl dehydrogenase, mitochondrial (509 aa).

Residues 1–35 (MQSWSRVYCSLAKRGHFNRISHGLQGVSSVPLRTY) constitute a mitochondrion transit peptide. The residue at position 66 (Lys-66) is an N6-acetyllysine; alternate. Position 66 is an N6-succinyllysine; alternate (Lys-66). FAD contacts are provided by residues 71-80 (EKNDTLGGTC) and Lys-89. Cys-80 and Cys-85 are joined by a disulfide. An N6-acetyllysine; alternate mark is found at Lys-122, Lys-132, and Lys-143. N6-succinyllysine; alternate is present on residues Lys-122, Lys-132, and Lys-143. Gly-154 is an FAD binding site. Residues Lys-159 and Lys-166 each carry the N6-succinyllysine modification. Position 183–185 (183–185 (TGS)) interacts with FAD. Residues 220–227 (GAGVIGVE) and Glu-243 contribute to the NAD(+) site. 2 positions are modified to N6-succinyllysine: Lys-273 and Lys-277. Val-278 is an NAD(+) binding site. Residues Ser-285 and Ser-297 each carry the phosphoserine modification. NAD(+) is bound at residue Gly-314. N6-acetyllysine is present on Lys-346. Residues Asp-355 and 361-364 (MLAH) contribute to the FAD site. Lys-410 is modified (N6-acetyllysine; alternate). Residue Lys-410 is modified to N6-succinyllysine; alternate. 2 positions are modified to N6-acetyllysine: Lys-417 and Lys-420. At Lys-430 the chain carries N6-succinyllysine. His-487 (proton acceptor) is an active-site residue. A Phosphoserine modification is found at Ser-502. Position 505 is an N6-acetyllysine; alternate (Lys-505). An N6-succinyllysine; alternate modification is found at Lys-505.

Belongs to the class-I pyridine nucleotide-disulfide oxidoreductase family. Homodimer. Part of the multimeric pyruvate dehydrogenase complex that contains multiple copies of pyruvate dehydrogenase (subunits PDHA (PDHA1 or PDHA2) and PDHB, E1), dihydrolipoamide acetyltransferase (DLAT, E2) and lipoamide dehydrogenase (DLD, E3). These subunits are bound to an inner core composed of about 48 DLAT and 12 PDHX molecules (by non covalent bonds). The 2-oxoglutarate dehydrogenase complex is composed of OGDH (2-oxoglutarate dehydrogenase; E1), DLST (dihydrolipoamide succinyltransferase; E2), DLD (dihydrolipoamide dehydrogenase; E3) and the assembly factor KGD4. It contains multiple copies of the three enzymatic components (E1, E2 and E3). In the nucleus, the 2-oxoglutarate dehydrogenase complex associates with KAT2A. Interacts with PDHX. The cofactor is FAD. In terms of processing, tyrosine phosphorylated.

Its subcellular location is the mitochondrion matrix. It localises to the nucleus. The protein resides in the cell projection. It is found in the cilium. The protein localises to the flagellum. Its subcellular location is the cytoplasmic vesicle. It localises to the secretory vesicle. The protein resides in the acrosome. It catalyses the reaction N(6)-[(R)-dihydrolipoyl]-L-lysyl-[protein] + NAD(+) = N(6)-[(R)-lipoyl]-L-lysyl-[protein] + NADH + H(+). Its function is as follows. Lipoamide dehydrogenase is a component of the glycine cleavage system as well as an E3 component of three alpha-ketoacid dehydrogenase complexes (pyruvate-, alpha-ketoglutarate-, and branched-chain amino acid-dehydrogenase complex). The 2-oxoglutarate dehydrogenase complex is mainly active in the mitochondrion. A fraction of the 2-oxoglutarate dehydrogenase complex also localizes in the nucleus and is required for lysine succinylation of histones: associates with KAT2A on chromatin and provides succinyl-CoA to histone succinyltransferase KAT2A. In monomeric form may have additional moonlighting function as serine protease. Involved in the hyperactivation of spermatazoa during capacitation and in the spermatazoal acrosome reaction. The protein is Dihydrolipoyl dehydrogenase, mitochondrial (DLD) of Cricetulus griseus (Chinese hamster).